Consider the following 310-residue polypeptide: Tagatose-6-phosphate kinase (310 aa).

This sequence belongs to the carbohydrate kinase PfkB family. LacC subfamily.

The enzyme catalyses D-tagatofuranose 6-phosphate + ATP = D-tagatofuranose 1,6-bisphosphate + ADP + H(+). It functions in the pathway carbohydrate metabolism; D-tagatose 6-phosphate degradation; D-glyceraldehyde 3-phosphate and glycerone phosphate from D-tagatose 6-phosphate: step 1/2. In Lactococcus lactis subsp. lactis (Streptococcus lactis), this protein is Tagatose-6-phosphate kinase.